The primary structure comprises 598 residues: Potassium voltage-gated channel subfamily A member 5 (598 aa).

The tract at residues 1 to 89 (MEIALGPLEN…EEGEGDPGLS (89 aa)) is disordered. The segment at 1-195 (MEIALGPLEN…FYQLGDEAME (195 aa)) is tetramerization domain. Residues 1 to 231 (MEIALGPLEN…LIFEYPESSG (231 aa)) are Cytoplasmic-facing. The span at 60 to 69 (RPLPPQPPEL) shows a compositional bias: pro residues. Lysine 205 participates in a covalent cross-link: Glycyl lysine isopeptide (Lys-Gly) (interchain with G-Cter in SUMO). A helical membrane pass occupies residues 232 to 253 (SARAIAIVSVLVILISIITFCL). At 254 to 308 (ETLPEFKDERELLRHPPVPHQPPAAPALGANGSGAVAPASGSTVAPLLPRTLADP) the chain is on the extracellular side. Residues 309-330 (FFIVETTCVIWFTFELLVRFFA) form a helical membrane-spanning segment. A lipid anchor (S-palmitoyl cysteine) is attached at cysteine 331. Over 331 to 341 (CPSKAEFSRNI) the chain is Cytoplasmic. Residues 342-362 (MNIIDIVAIFPYFITLGTELA) form a helical membrane-spanning segment. Topologically, residues 363-380 (EQQPGGGGGGQNGQQAMS) are extracellular. A helical; Voltage-sensor transmembrane segment spans residues 381–401 (LAILRVIRLVRVFRIFKLSRH). The Cytoplasmic segment spans residues 402–416 (SKGLQILGKTLQASM). The interval 403-416 (KGLQILGKTLQASM) is S4-S5 linker. Residues 417–438 (RELGLLIFFLFIGVILFSSAVY) form a helical membrane-spanning segment. The Extracellular segment spans residues 439-452 (FAEADNQGTHFSSI). The segment at residues 453–464 (PDAFWWAVVTMT) is an intramembrane region (helical). A Selectivity filter motif is present at residues 465–470 (TVGYGD). Residues 465–472 (TVGYGDMR) lie within the membrane without spanning it. A helical transmembrane segment spans residues 480 to 508 (IVGSLCAIAGVLTIALPVPVIVSNFNYFY). Residues 509–598 (HRETDHEEQA…CLDTSRETDL (90 aa)) lie on the Cytoplasmic side of the membrane. The segment at 517–539 (QAALKEEPGSQSRGTSLDAGGQR) is disordered. A Glycyl lysine isopeptide (Lys-Gly) (interchain with G-Cter in SUMO) cross-link involves residue lysine 521. Positions 596–598 (TDL) match the PDZ-binding motif.

The protein belongs to the potassium channel family. A (Shaker) (TC 1.A.1.2) subfamily. Kv1.5/KCNA5 sub-subfamily. In terms of assembly, homotetramer and heterotetramer of potassium channel proteins. Interacts with DLG1, which enhances channel currents. Forms a ternary complex with DLG1 and CAV3. Interacts with KCNAB1. Interacts with UBE2I. Interacts with XIRP2; the interaction is required for normal action potential configuration in the heart. Glycosylated. In terms of processing, sumoylated on Lys-205, and Lys-521, preferentially with SUMO3. Sumoylation regulates the voltage sensitivity of the channel.

It localises to the cell membrane. The catalysed reaction is K(+)(in) = K(+)(out). Functionally, voltage-gated potassium channel that mediates transmembrane potassium transport in excitable membranes. Forms tetrameric potassium-selective channels through which potassium ions pass in accordance with their electrochemical gradient. The channel alternates between opened and closed conformations in response to the voltage difference across the membrane. Can form functional homotetrameric channels and heterotetrameric channels that contain variable proportions of KCNA1, KCNA2, KCNA4, KCNA5, and possibly other family members as well; channel properties depend on the type of alpha subunits that are part of the channel. Channel properties are modulated by cytoplasmic beta subunits that regulate the subcellular location of the alpha subunits and promote rapid inactivation. Homotetrameric channels display rapid activation and slow inactivation. Required for normal electrical conduction including formation of the infranodal ventricular conduction system and normal action potential configuration, as a result of its interaction with XIRP2. May play a role in regulating the secretion of insulin in normal pancreatic islets. This chain is Potassium voltage-gated channel subfamily A member 5 (KCNA5), found in Oryctolagus cuniculus (Rabbit).